The following is a 95-amino-acid chain: Small ubiquitin-related modifier 2-B (95 aa).

Lys-11 participates in a covalent cross-link: Glycyl lysine isopeptide (Lys-Gly) (interchain with G-Cter in SUMO). The Ubiquitin-like domain occupies 16–95; the sequence is DHINLKVAGQ…VFQQQTGGSY (80 aa). Gly-93 participates in a covalent cross-link: Glycyl lysine isopeptide (Gly-Lys) (interchain with K-? in acceptor proteins). A propeptide spanning residues 94–95 is cleaved from the precursor; sequence SY.

It belongs to the ubiquitin family. SUMO subfamily. In terms of assembly, interacts with sae2 and ube2i. Covalently attached to a number of proteins, including top2. In terms of processing, polymeric chains can be formed through Lys-11 cross-linking. Post-translationally, cleavage of precursor form by a sentrin-specific protease is necessary for function.

The protein localises to the nucleus. Its function is as follows. Ubiquitin-like protein that can be covalently attached to proteins as a monomer or as a lysine-linked polymer. Covalent attachment via an isopeptide bond to its substrates requires prior activation by the E1 complex sae1-sae2 and linkage to the E2 enzyme ube2i, and can be promoted by an E3 ligase such as pias1-4. This post-translational modification on lysine residues of proteins plays a crucial role in a number of cellular processes such as nuclear transport, DNA replication and repair, mitosis and signal transduction. Polymeric sumo2 chains are also susceptible to polyubiquitination which functions as a signal for proteasomal degradation of modified proteins. This Xenopus laevis (African clawed frog) protein is Small ubiquitin-related modifier 2-B (sumo2-b).